Consider the following 114-residue polypeptide: Superoxide dismutase [Cu-Zn] (114 aa).

Cu cation-binding residues include His-37, His-39, and His-54. Positions 48-76 are disordered; sequence CMSSGPHFNPRSKEHGAPTDENRHLGDLG. Zn(2+) contacts are provided by His-54, His-62, His-71, and Asp-74. Basic and acidic residues predominate over residues 58 to 73; that stretch reads RSKEHGAPTDENRHLG. His-111 contributes to the Cu cation binding site.

The protein belongs to the Cu-Zn superoxide dismutase family. In terms of assembly, homodimer. It depends on Cu cation as a cofactor. Zn(2+) serves as cofactor.

It localises to the cytoplasm. It carries out the reaction 2 superoxide + 2 H(+) = H2O2 + O2. In terms of biological role, destroys radicals which are normally produced within the cells and which are toxic to biological systems. This is Superoxide dismutase [Cu-Zn] from Drosophila obscura (Fruit fly).